The following is a 713-amino-acid chain: Nucleolin (713 aa).

The segment at 1–309 (MVKLAKAGKT…QKIEGSEPTT (309 aa)) is disordered. 3 positions are modified to N6-acetyllysine: Lys9, Lys15, and Lys16. A compositionally biased stretch (acidic residues) spans 24–46 (VEEDSEDEEMSEDEDDSSGEEEV). Ser28, Ser34, Ser40, and Ser41 each carry phosphoserine. Over residues 56–111 (ATTTPAKKVVVSQTKKAAVPTPAKKAAVTPGKKAAATPAKKAVTPAKVVPTPGKKG) the composition is skewed to low complexity. Copy 1 of the repeat occupies 58 to 65 (TTPAKKVV). The interval 58 to 135 (TTPAKKVVVS…GAVTPAKGAK (78 aa)) is 8 X 8 AA tandem repeats of X-T-P-X-K-K-X-X. Ser67 carries the post-translational modification Phosphoserine. Residues Thr69, Thr76, Thr84, and Thr92 each carry the phosphothreonine modification. A run of 3 repeats spans residues 75–82 (PTPAKKAA), 83–90 (VTPGKKAA), and 91–98 (ATPAKKAV). Lys96 is modified (N6-acetyllysine). Residue Thr99 is modified to Phosphothreonine. The stretch at 99–104 (TPAKVV) is one 5; truncated repeat. Residue Lys102 is modified to N6-acetyllysine. Copy 6 of the repeat occupies 105-112 (PTPGKKGA). Residue Thr106 is modified to Phosphothreonine. Lys109 and Lys116 each carry N6-acetyllysine. 2 repeat units span residues 120-127 (PTPGKKGA) and 128-135 (VTPAKGAK). Residue Thr121 is modified to Phosphothreonine. The residue at position 124 (Lys124) is an N6-acetyllysine. 2 positions are modified to phosphoserine: Ser145 and Ser157. The segment covering 145-168 (SDEDEDEEDEDDSDEDEDEEDEFE) has biased composition (acidic residues). Over residues 169-186 (PPVVKGVKPAKAAPAAPA) the composition is skewed to low complexity. A phosphoserine mark is found at Ser187 and Ser213. Acidic residues predominate over residues 187–218 (SEDEDEEDDDDEDDDDDDEEEEEEDDSEEEVM). Thr221 is modified (phosphothreonine). Over residues 242-275 (EEEEDDEDDEDEEEDEDEEDEEDDEDEDEEEEEE) the composition is skewed to acidic residues. The span at 288–304 (MTKQKEAPEAKKQKIEG) shows a compositional bias: basic and acidic residues. Residue Lys301 forms a Glycyl lysine isopeptide (Lys-Gly) (interchain with G-Cter in SUMO1); alternate linkage. Lys301 is covalently cross-linked (Glycyl lysine isopeptide (Lys-Gly) (interchain with G-Cter in SUMO2); alternate). Phosphoserine is present on Ser305. RRM domains follow at residues 311–387 (FNLF…KPKG) and 397–470 (RTLL…YTGE). At Lys322 the chain carries N6-acetyllysine. Lys328 is covalently cross-linked (Glycyl lysine isopeptide (Lys-Gly) (interchain with G-Cter in SUMO1); alternate). A Glycyl lysine isopeptide (Lys-Gly) (interchain with G-Cter in SUMO2); alternate cross-link involves residue Lys328. Lys352 carries the post-translational modification N6-acetyllysine. Ser360 carries the post-translational modification Phosphoserine. Residue Thr371 is modified to Phosphothreonine. Lys374 participates in a covalent cross-link: Glycyl lysine isopeptide (Lys-Gly) (interchain with G-Cter in SUMO2). Lys381 participates in a covalent cross-link: Glycyl lysine isopeptide (Lys-Gly) (interchain with G-Cter in SUMO2); alternate. At Lys381 the chain carries N6-acetyllysine; alternate. Lys402 carries the N6-acetyllysine modification. Residue Ser405 is modified to Phosphoserine. At Thr409 the chain carries Phosphothreonine. N6-acetyllysine is present on Lys448. A phosphoserine mark is found at Ser462 and Ser464. N6-acetyllysine is present on residues Lys471 and Lys480. Residues 489–563 (KTLVLSNLSY…RTIRLELQGP (75 aa)) enclose the RRM 3 domain. Lys516 participates in a covalent cross-link: Glycyl lysine isopeptide (Lys-Gly) (interchain with G-Cter in SUMO2); alternate. Lys516 is modified (N6-acetyllysine; alternate). At Lys524 the chain carries N6-acetyllysine. A Phosphoserine modification is found at Ser566. Lys575 bears the N6-acetyllysine mark. One can recognise an RRM 4 domain in the interval 575–650 (KTLFVKGLSE…NKVTLDWAKP (76 aa)). Lys580 is covalently cross-linked (Glycyl lysine isopeptide (Lys-Gly) (interchain with G-Cter in SUMO2); alternate). N6-acetyllysine; alternate is present on Lys580. The residue at position 583 (Ser583) is a Phosphoserine. Residue Lys592 forms a Glycyl lysine isopeptide (Lys-Gly) (interchain with G-Cter in SUMO1); alternate linkage. A Glycyl lysine isopeptide (Lys-Gly) (interchain with G-Cter in SUMO2); alternate cross-link involves residue Lys592. 2 positions are modified to phosphoserine: Ser594 and Ser622. Lys627 participates in a covalent cross-link: Glycyl lysine isopeptide (Lys-Gly) (interchain with G-Cter in SUMO2). A disordered region spans residues 645 to 713 (LDWAKPKGEG…KPQGKKTKFE (69 aa)). Lys649 is modified (N6-acetyllysine). Positions 653–702 (EGGFGGRGGGRGGFGGRGGGRGGRGGFGGRGRGGFGGRGGFRGGRGGGGD) are enriched in gly residues. 9 positions are modified to asymmetric dimethylarginine: Arg659, Arg663, Arg669, Arg673, Arg676, Arg682, Arg684, Arg690, and Arg694. Asymmetric dimethylarginine; alternate is present on Arg697. At Arg697 the chain carries Omega-N-methylarginine; alternate.

As to quaternary structure, identified in a IGF2BP1-dependent mRNP granule complex containing untranslated mRNAs. Component of the SWAP complex that consists of NPM1, NCL/nucleolin, PARP1 and SWAP70. Component of a complex which is at least composed of HTATSF1/Tat-SF1, the P-TEFb complex components CDK9 and CCNT1, RNA polymerase II, SUPT5H, and NCL/nucleolin. Interacts with AICDA. Interacts with APTX. Interacts with C1QBP. Interacts with ERBB4. Interacts (via C-terminus) with FMR1 isoform 6 (via N-terminus). Interacts with GZF1; this interaction is important for nucleolar localization of GZF1. Interacts with NSUN2. Interacts with NVL. Interacts (via N-terminus domain) with SETX. Interacts (via RRM1 and C-terminal RRM4/Arg/Gly-rich domains) with TERT; the interaction is important for nucleolar localization of TERT. Interacts with WDR46. Interacts with ZFP36. Interacts with LRRC34. Interacts with RRP1B. Interacts with HNRNPU; this interaction occurs during mitosis. Interacts with RIOK1; RIOK1 recruits NCL to PRMT5 for symmetrically methylation. Interacts with ZBTB7B. Interacts with MDK; this interaction promotes NCL clustering and lateral movements of this complex into lipid rafts leading to MDK internalization. Interacts with HDGF. Interacts with ALKBH2. Interacts with IGFBP5; this interaction is necessary for IGFBP5 localization to the nucleus. Interacts with DDX24 (when ubiquitinated); this interaction may be important during ribosome biogenesis. Post-translationally, some glutamate residues are glycylated by TTLL8. This modification occurs exclusively on glutamate residues and results in a glycine chain on the gamma-carboxyl group. In terms of processing, symmetrically methylated by PRMT5.

It localises to the nucleus. Its subcellular location is the nucleolus. The protein resides in the cytoplasm. Functionally, nucleolin is the major nucleolar protein of growing eukaryotic cells. It is found associated with intranucleolar chromatin and pre-ribosomal particles. It induces chromatin decondensation by binding to histone H1. It is thought to play a role in pre-rRNA transcription and ribosome assembly. May play a role in the process of transcriptional elongation. Binds RNA oligonucleotides with 5'-UUAGGG-3' repeats more tightly than the telomeric single-stranded DNA 5'-TTAGGG-3' repeats. The sequence is that of Nucleolin (Ncl) from Rattus norvegicus (Rat).